The primary structure comprises 127 residues: Glycine cleavage system H protein 2 (127 aa).

The 82-residue stretch at 24-105 folds into the Lipoyl-binding domain; that stretch reads SVTVGISDHA…PYGSWIFKLK (82 aa). N6-lipoyllysine is present on Lys65.

This sequence belongs to the GcvH family. The glycine cleavage system is composed of four proteins: P, T, L and H. The cofactor is (R)-lipoate.

Functionally, the glycine cleavage system catalyzes the degradation of glycine. The H protein shuttles the methylamine group of glycine from the P protein to the T protein. This chain is Glycine cleavage system H protein 2, found in Pseudomonas putida (strain ATCC 47054 / DSM 6125 / CFBP 8728 / NCIMB 11950 / KT2440).